The sequence spans 177 residues: Thymidine kinase (177 aa).

Residue 11 to 18 (GPMFSGKS) coordinates ATP. Glu-83 acts as the Proton acceptor in catalysis. Phe-113 contacts substrate. Residues Cys-138 and Cys-141 each coordinate Zn(2+). Position 157–161 (157–161 (IEIIG)) interacts with substrate. 2 residues coordinate Zn(2+): Cys-170 and Cys-173.

Belongs to the thymidine kinase family. Homotetramer. Two molecules of substrate bind to each enzyme tetramer.

It carries out the reaction thymidine + ATP = dTMP + ADP + H(+). Functionally, phosphorylates thymidine and thymidine analogs, such as azidothymidine (AZT). Part of the salvage pathway for pyrimidine deoxyribonucleotide synthesis. This chain is Thymidine kinase (OPG101), found in Vaccinia virus (strain Copenhagen) (VACV).